A 442-amino-acid chain; its full sequence is Endothelin receptor type B (442 aa).

Residues 1–26 form the signal peptide; the sequence is MQSSASRCGRALVALLLACGLLGVWG. The Extracellular segment spans residues 27-101; that stretch reads EKRGFPPAQA…RKIEINKTFK (75 aa). 2 N-linked (GlcNAc...) asparagine glycosylation sites follow: asparagine 60 and asparagine 97. The helical transmembrane segment at 102 to 126 threads the bilayer; the sequence is YINTIVSCLVFVLGIIGNSTLLRII. Residues 127–137 are Cytoplasmic-facing; that stretch reads YKNKCMRNGPN. The chain crosses the membrane as a helical span at residues 138 to 163; sequence ILIASLALGDLLHIIIDIPINAYKLL. Over 164-175 the chain is Extracellular; sequence AGDWPFGAEMCK. Residues cysteine 174 and cysteine 255 are joined by a disulfide bond. Residues 176–197 form a helical membrane-spanning segment; the sequence is LVPFIQKASVGITVLSLCALSI. Residues 198–218 lie on the Cytoplasmic side of the membrane; that stretch reads DRYRAVASWSRIKGIGVPKWT. A helical membrane pass occupies residues 219–243; the sequence is AVEIVLIWVVSVVLAVPEAIGFDVI. Topologically, residues 244 to 271 are extracellular; that stretch reads TSDYKGKPLRVCMLNPFQKTAFMQFYKT. The chain crosses the membrane as a helical span at residues 272–296; the sequence is AKDWWLFSFYFCLPLAITAIFYTLM. Residues 297–324 lie on the Cytoplasmic side of the membrane; the sequence is TCEMLRKKSGMQIALNDHLKQRREVAKT. A Phosphoserine modification is found at serine 305. Residues 325 to 350 traverse the membrane as a helical segment; it reads VFCLVLVFALCWLPLHLSRILKLTLY. Over 351–362 the chain is Extracellular; it reads DQSNPQRCELLS. The helical transmembrane segment at 363 to 389 threads the bilayer; the sequence is FLLVLDYIGINMASLNSCINPIALYLV. Over 390–442 the chain is Cytoplasmic; that stretch reads SKRFKNCFKSCLCCWCQTFEEKQSLEEKQSCLKFKANDHGYDNFRSSNKYSSS. 3 S-palmitoyl cysteine lipidation sites follow: cysteine 402, cysteine 403, and cysteine 405. Residue serine 419 is modified to Phosphoserine. At tyrosine 439 the chain carries Phosphotyrosine. 3 positions are modified to phosphoserine: serine 440, serine 441, and serine 442.

This sequence belongs to the G-protein coupled receptor 1 family. Endothelin receptor subfamily. EDNRB sub-subfamily. Widely distributed in cell types of a variety of tissues.

It localises to the cell membrane. Functionally, non-specific receptor for endothelin 1, 2, and 3. Mediates its action by association with G proteins that activate a phosphatidylinositol-calcium second messenger system. The sequence is that of Endothelin receptor type B from Rattus norvegicus (Rat).